The following is a 144-amino-acid chain: MYPAHLLVLLAVCVSLLGASDIPPQPLNLYQFGNMIQCANHGRRPTQHYTDYGCYCGKGGSGTPVDELDRCCKTHDDCYTEAGKKGCYPKLTLYSWKCGSDGPQCDDSETGCQRFVCDCDATAAKCFAKAPYNKENYNIKTPCQ.

An N-terminal signal peptide occupies residues 1 to 19 (MYPAHLLVLLAVCVSLLGA). The propeptide occupies 20–27 (SDIPPQPL). 7 disulfides stabilise this stretch: cysteine 38/cysteine 98, cysteine 54/cysteine 143, cysteine 56/cysteine 72, cysteine 71/cysteine 126, cysteine 78/cysteine 119, cysteine 87/cysteine 112, and cysteine 105/cysteine 117. Ca(2+) contacts are provided by tyrosine 55, glycine 57, and glycine 59. Residue histidine 75 is part of the active site. Residue aspartate 76 coordinates Ca(2+). Residue aspartate 120 is part of the active site.

Belongs to the phospholipase A2 family. Group I subfamily. D49 sub-subfamily. Ca(2+) is required as a cofactor. As to expression, expressed by the venom gland.

It localises to the secreted. The catalysed reaction is a 1,2-diacyl-sn-glycero-3-phosphocholine + H2O = a 1-acyl-sn-glycero-3-phosphocholine + a fatty acid + H(+). Snake venom phospholipase A2 (PLA2) that inhibits collagen-induced platelet aggregation. PLA2 catalyzes the calcium-dependent hydrolysis of the 2-acyl groups in 3-sn-phosphoglycerides. This Austrelaps superbus (Lowland copperhead snake) protein is Acidic phospholipase A2 S15-109.